A 265-amino-acid polypeptide reads, in one-letter code: AT-hook motif nuclear-localized protein 18 (265 aa).

Positions 1 to 75 (MDEVSRSHTP…AGSKNKPKAP (75 aa)) are disordered. The span at 19–30 (HYHHQNAGRQKR) shows a compositional bias: basic residues. Residues 59–71 (RRPRGRPAGSKNK) constitute a DNA-binding region (a.T hook). The region spanning 83 to 217 (ANAFRCHVME…EEEETEREID (135 aa)) is the PPC domain.

It localises to the nucleus. Its function is as follows. Transcription factor that specifically binds AT-rich DNA sequences related to the nuclear matrix attachment regions (MARs). Acts redundantly with AHL22, AHL27 and AHL29 in the regulation of flowering and regulation of the hypocotyl elongation. The sequence is that of AT-hook motif nuclear-localized protein 18 from Arabidopsis thaliana (Mouse-ear cress).